We begin with the raw amino-acid sequence, 338 residues long: Terpene synthase 1 (338 aa).

The short motif at 80–85 (DDALDS) is the DDxx(x)D/E motif element. The NDxxSxxxD/E motif signature appears at 220-228 (NDLVSYEKE).

The protein belongs to the terpene synthase family.

The enzyme catalyses (2E,6E)-farnesyl diphosphate = (2S,3R,6S,9S)-(-)-protoillud-7-ene + diphosphate. In terms of biological role, terpene synthase that converts its substrate farnesyl diphosphate (FPP) into the sesquiterpene protoillud-7-ene. The polypeptide is Terpene synthase 1 (Cavenderia fasciculata (Slime mold)).